Consider the following 216-residue polypeptide: ATP phosphoribosyltransferase (216 aa).

This sequence belongs to the ATP phosphoribosyltransferase family. Short subfamily. In terms of assembly, heteromultimer composed of HisG and HisZ subunits.

The protein resides in the cytoplasm. It carries out the reaction 1-(5-phospho-beta-D-ribosyl)-ATP + diphosphate = 5-phospho-alpha-D-ribose 1-diphosphate + ATP. It functions in the pathway amino-acid biosynthesis; L-histidine biosynthesis; L-histidine from 5-phospho-alpha-D-ribose 1-diphosphate: step 1/9. Its function is as follows. Catalyzes the condensation of ATP and 5-phosphoribose 1-diphosphate to form N'-(5'-phosphoribosyl)-ATP (PR-ATP). Has a crucial role in the pathway because the rate of histidine biosynthesis seems to be controlled primarily by regulation of HisG enzymatic activity. The protein is ATP phosphoribosyltransferase of Nitrosomonas europaea (strain ATCC 19718 / CIP 103999 / KCTC 2705 / NBRC 14298).